A 95-amino-acid chain; its full sequence is Protein TusB (95 aa).

Belongs to the DsrH/TusB family. In terms of assembly, heterohexamer, formed by a dimer of trimers. The hexameric TusBCD complex contains 2 copies each of TusB, TusC and TusD. The TusBCD complex interacts with TusE.

The protein localises to the cytoplasm. Functionally, part of a sulfur-relay system required for 2-thiolation of 5-methylaminomethyl-2-thiouridine (mnm(5)s(2)U) at tRNA wobble positions. The chain is Protein TusB from Escherichia coli O157:H7.